A 669-amino-acid polypeptide reads, in one-letter code: Glycerol uptake/efflux facilitator protein (669 aa).

Polar residues predominate over residues 1–16 (MSNPQKALNDFLSSES). 2 disordered regions span residues 1 to 99 (MSNP…TYVP) and 123 to 147 (QDINHKDNGPPSASSNRAFRPRGQT). The Extracellular portion of the chain corresponds to 1–254 (MSNPQKALND…WSSVKNTYLK (254 aa)). Residues 50 to 68 (NNNNNNNNNNNNSNNNNNG) are compositionally biased toward low complexity. Positions 72–81 (GNDDDYDYEM) are enriched in acidic residues. Composition is skewed to polar residues over residues 87–99 (SPQSARPTPTYVP) and 133–147 (PSASSNRAFRPRGQT). Position 150 is a phosphoserine (serine 150). Residues 167–215 (HTIPESHLSRRRSRSRATSNAGHSANTGATNGRTTGAQTNMESNESPRN) form a disordered region. Threonine 168 is subject to Phosphothreonine. Low complexity predominate over residues 191–206 (ANTGATNGRTTGAQTN). Phosphoserine occurs at positions 209 and 212. A helical transmembrane segment spans residues 255–275 (EFLAEFMGTMVMIIFGSAVVC). Residues 276–325 (QVNVAGKIQQDNFNVALDNLNVTGSSAETIDAMKSLTSLVSSVAGGTFDD) are Cytoplasmic-facing. A helical membrane pass occupies residues 326–346 (VALGWAAAVVMGYFCAGGSAI). The Extracellular portion of the chain corresponds to 347–369 (SGAHLNPSITLANLVYRGFPLKK). The NPA 1 signature appears at 352–354 (NPS). The helical transmembrane segment at 370–390 (VPYYFAGQLIGAFTGALILFI) threads the bilayer. Over 391–446 (WYKRVLQEAYSDWWMNESVAGMFCVFPKPYLSSGRQFFSEFLCGAMLQAGTFALTD) the chain is Cytoplasmic. A helical transmembrane segment spans residues 447-467 (PYTCLSSDVFPLMMFILIFII). Residues 468-506 (NASMAYQTGTAMNLARDLGPRLALYAVGFDHKMLWVHHH) are Extracellular-facing. Positions 480-482 (NLA) match the NPA 2 motif. The helical transmembrane segment at 507–527 (HFFWVPMVGPFIGALMGGLVY) threads the bilayer. Residues 528–669 (DVCIYQGHES…SHYGNAKKVT (142 aa)) lie on the Cytoplasmic side of the membrane. Disordered stretches follow at residues 591–615 (LQKTKTKSSISDNENEAGEKKVQFK) and 635–669 (DSIETASLGATTTDSIGLSDTSSEDSHYGNAKKVT). Positions 638-655 (ETASLGATTTDSIGLSDT) are enriched in polar residues.

This sequence belongs to the MIP/aquaporin (TC 1.A.8) family.

The protein localises to the membrane. Functionally, channel protein for glycerol. Has a role in both glycerol influx and efflux. Plays a role in osmoregulation: under osmotic stress the channel is apparently closed to allow accumulation of glycerol in the cell under hyperosmotic conditions. This is Glycerol uptake/efflux facilitator protein (FPS1) from Saccharomyces cerevisiae (strain ATCC 204508 / S288c) (Baker's yeast).